Reading from the N-terminus, the 152-residue chain is D-aminoacyl-tRNA deacylase (152 aa).

The Gly-cisPro motif, important for rejection of L-amino acids signature appears at 142 to 143; that stretch reads GP.

It belongs to the DTD family. In terms of assembly, homodimer.

It localises to the cytoplasm. It carries out the reaction glycyl-tRNA(Ala) + H2O = tRNA(Ala) + glycine + H(+). The catalysed reaction is a D-aminoacyl-tRNA + H2O = a tRNA + a D-alpha-amino acid + H(+). An aminoacyl-tRNA editing enzyme that deacylates mischarged D-aminoacyl-tRNAs. Also deacylates mischarged glycyl-tRNA(Ala), protecting cells against glycine mischarging by AlaRS. Acts via tRNA-based rather than protein-based catalysis; rejects L-amino acids rather than detecting D-amino acids in the active site. By recycling D-aminoacyl-tRNA to D-amino acids and free tRNA molecules, this enzyme counteracts the toxicity associated with the formation of D-aminoacyl-tRNA entities in vivo and helps enforce protein L-homochirality. The polypeptide is D-aminoacyl-tRNA deacylase (Burkholderia vietnamiensis (strain G4 / LMG 22486) (Burkholderia cepacia (strain R1808))).